The chain runs to 93 residues: Probable chloroethene reductive dehalogenase membrane anchor protein (93 aa).

The next 3 membrane-spanning stretches (helical) occupy residues 3 to 23, 35 to 55, and 64 to 84; these read AIYF…FTWF, WVLG…TYAS, and SAWI…LFAA.

This sequence belongs to the PceB family.

The protein localises to the cell membrane. In terms of biological role, may act as a membrane anchor for the chloroethene reductive dehalogenase VcrA. This is Probable chloroethene reductive dehalogenase membrane anchor protein from Dehalococcoides mccartyi (strain VS).